A 256-amino-acid chain; its full sequence is Small ribosomal subunit protein eS1 (256 aa).

Residues 1-18 show a composition bias toward basic residues; the sequence is MAVGKNKRLSKGKKGIKK. Positions 1 to 20 are disordered; that stretch reads MAVGKNKRLSKGKKGIKKRT. Ala-2 is modified (N-acetylalanine; partial).

This sequence belongs to the eukaryotic ribosomal protein eS1 family. As to quaternary structure, component of the small ribosomal subunit. Mature ribosomes consist of a small (40S) and a large (60S) subunit. The 40S subunit contains about 33 different proteins and 1 molecule of RNA (18S). The 60S subunit contains about 49 different proteins and 3 molecules of RNA (25S, 5.8S and 5S).

The protein localises to the cytoplasm. The polypeptide is Small ribosomal subunit protein eS1 (rps1) (Emericella nidulans (strain FGSC A4 / ATCC 38163 / CBS 112.46 / NRRL 194 / M139) (Aspergillus nidulans)).